A 62-amino-acid chain; its full sequence is UPF0434 protein Fphi_1862 (62 aa).

This sequence belongs to the UPF0434 family.

This Francisella philomiragia subsp. philomiragia (strain ATCC 25017 / CCUG 19701 / FSC 153 / O#319-036) protein is UPF0434 protein Fphi_1862.